Reading from the N-terminus, the 131-residue chain is uncharacterized protein (131 aa).

Its subcellular location is the mitochondrion. This is an uncharacterized protein from Arabidopsis thaliana (Mouse-ear cress).